A 275-amino-acid polypeptide reads, in one-letter code: MANYTAADVKKLRELTGSGMLDCKKALEESAGDFDKAVEILRVKGAKDVGKRAERNATEGLVAVSGNTMIEVNSETDFVAKNSEFKEFAANVADAAAAAKANSQEELAAVDVDGKTADAALQEFSAKIGEKLELRRAVTLEGDKTAVYLHQRSADLPPAVGVLVAFTGEGEAAEAAARQAAMQIAALKASYLTREDVPAEIIEKERSIAEQITREEGKPEQAIPKIVEGRLNGFYKENVLLEQSSVADSKKTVKALLDEAGVTVTSFARFEVGQA.

An involved in Mg(2+) ion dislocation from EF-Tu region spans residues 76–79 (TDFV).

This sequence belongs to the EF-Ts family.

It is found in the cytoplasm. Its function is as follows. Associates with the EF-Tu.GDP complex and induces the exchange of GDP to GTP. It remains bound to the aminoacyl-tRNA.EF-Tu.GTP complex up to the GTP hydrolysis stage on the ribosome. The chain is Elongation factor Ts from Corynebacterium glutamicum (strain R).